The following is a 353-amino-acid chain: 2-Hydroxyacid oxidase 2 (353 aa).

The FMN hydroxy acid dehydrogenase domain maps to 2 to 353 (PLVCLADFKA…SPDLIQFSRL (352 aa)). Residues 77-79 (PTA), Ser-106, and Gln-128 contribute to the FMN site. Tyr-130 contributes to the a 2-oxocarboxylate binding site. A Phosphoserine modification is found at Ser-133. Thr-156 is an FMN binding site. Arg-165 provides a ligand contact to a 2-oxocarboxylate. Lys-224 is a binding site for FMN. Catalysis depends on His-248, which acts as the Proton acceptor. Arg-251 contributes to the a 2-oxocarboxylate binding site. Residues 279–283 (DGGVR) and 302–303 (GR) each bind FMN. The Microbody targeting signal motif lies at 351-353 (SRL).

The protein belongs to the FMN-dependent alpha-hydroxy acid dehydrogenase family. Homotetramer. Could also form homooctamer. FMN serves as cofactor. Expressed in kidney.

It localises to the peroxisome. It catalyses the reaction a (2S)-2-hydroxycarboxylate + O2 = a 2-oxocarboxylate + H2O2. The catalysed reaction is 2-hydroxyoctanoate + O2 = 2-oxooctanoate + H2O2. The enzyme catalyses 2-hydroxyhexadecanoate + O2 = 2-oxohexadecanoate + H2O2. It carries out the reaction 2-hydroxyhexanoate + O2 = 2-oxohexanoate + H2O2. It catalyses the reaction mandelate + O2 = phenylglyoxylate + H2O2. With respect to regulation, is inhibited in vitro by CCPST (4-carboxy-5-(4-chlorophenyl)sulfanyl-1,2,3-thiadiazole). Oxidase that catalyzes the oxidation of medium and long chain hydroxyacids such as 2-hydroxyhexadecanoate, 2-hydroxyoctanoate, 2-hydroxyhexanoate and 2-hydroxybutanoate, to the correspondong 2-oxoacids. Its role in the oxidation of 2-hydroxy fatty acids may contribute to the general pathway of fatty acid alpha-oxidation. Can also use mandelate as substrate. Active in vitro with the artificial electron acceptor 2,6-dichlorophenolindophenol (DCIP), but O2 is believed to be the physiological electron acceptor, leading to the production of H2O2. This chain is 2-Hydroxyacid oxidase 2 (Hao2), found in Rattus norvegicus (Rat).